The following is a 263-amino-acid chain: Purine nucleoside phosphorylase SERP0752 (263 aa).

3 residues coordinate Zn(2+): His79, Cys124, and His141.

The protein belongs to the purine nucleoside phosphorylase YfiH/LACC1 family. As to quaternary structure, homodimer. Requires Cu(2+) as cofactor. Zn(2+) is required as a cofactor.

It carries out the reaction adenosine + phosphate = alpha-D-ribose 1-phosphate + adenine. The catalysed reaction is S-methyl-5'-thioadenosine + phosphate = 5-(methylsulfanyl)-alpha-D-ribose 1-phosphate + adenine. It catalyses the reaction inosine + phosphate = alpha-D-ribose 1-phosphate + hypoxanthine. The enzyme catalyses adenosine + H2O + H(+) = inosine + NH4(+). Its function is as follows. Purine nucleoside enzyme that catalyzes the phosphorolysis of adenosine and inosine nucleosides, yielding D-ribose 1-phosphate and the respective free bases, adenine and hypoxanthine. Also catalyzes the phosphorolysis of S-methyl-5'-thioadenosine into adenine and S-methyl-5-thio-alpha-D-ribose 1-phosphate. Also has adenosine deaminase activity. The protein is Purine nucleoside phosphorylase SERP0752 of Staphylococcus epidermidis (strain ATCC 35984 / DSM 28319 / BCRC 17069 / CCUG 31568 / BM 3577 / RP62A).